The chain runs to 425 residues: Dihydroorotase (425 aa).

2 residues coordinate Zn(2+): histidine 60 and histidine 62. Substrate is bound by residues 62–64 and asparagine 94; that span reads HLR. Residues aspartate 152, histidine 179, and histidine 232 each contribute to the Zn(2+) site. Asparagine 278 serves as a coordination point for substrate. A Zn(2+)-binding site is contributed by aspartate 305. Residue aspartate 305 is part of the active site. Histidine 309 provides a ligand contact to substrate.

It belongs to the metallo-dependent hydrolases superfamily. DHOase family. Class I DHOase subfamily. The cofactor is Zn(2+).

It catalyses the reaction (S)-dihydroorotate + H2O = N-carbamoyl-L-aspartate + H(+). It functions in the pathway pyrimidine metabolism; UMP biosynthesis via de novo pathway; (S)-dihydroorotate from bicarbonate: step 3/3. Functionally, catalyzes the reversible cyclization of carbamoyl aspartate to dihydroorotate. This Syntrophotalea carbinolica (strain DSM 2380 / NBRC 103641 / GraBd1) (Pelobacter carbinolicus) protein is Dihydroorotase.